We begin with the raw amino-acid sequence, 144 residues long: Large ribosomal subunit protein uL16 (144 aa).

Belongs to the universal ribosomal protein uL16 family. In terms of assembly, part of the 50S ribosomal subunit.

Binds 23S rRNA and is also seen to make contacts with the A and possibly P site tRNAs. The protein is Large ribosomal subunit protein uL16 of Bacillus anthracis (strain A0248).